The following is a 354-amino-acid chain: Ornithine transcarbamylase, mitochondrial (354 aa).

Residues 1-32 (MLFNLKNLYRITKLTQNSKHLPRHFCRGPPNQ) constitute a mitochondrion transit peptide. Carbamoyl phosphate-binding positions include 90–94 (STRTR), Arg-141, and His-168. Arg-141 provides a ligand contact to L-ornithine. L-ornithine contacts are provided by residues Asn-199, 263 to 267 (DTWIS), 302 to 305 (HCLP), and Arg-330. Cys-303 is an active-site residue. Arg-330 provides a ligand contact to carbamoyl phosphate.

It belongs to the aspartate/ornithine carbamoyltransferase superfamily. OTCase family. As to quaternary structure, homotrimer. In terms of processing, cleavage of the precursor form to the active form occurs only in the kidney. As to expression, expressed in kidney, brain, heart, liver, pancreas, gizzard, small intestine and breast muscle. More abundant in mitochondrion-rich organs (heart, liver and brain) than in other organs. Activity is only detected in the kidney.

It localises to the mitochondrion matrix. It carries out the reaction carbamoyl phosphate + L-ornithine = L-citrulline + phosphate + H(+). It participates in nitrogen metabolism; urea cycle; L-citrulline from L-ornithine and carbamoyl phosphate: step 1/1. With respect to regulation, inhibition by ornithine increases at higher pH. Functionally, catalyzes the second step of the urea cycle, the condensation of carbamoyl phosphate with L-ornithine to form L-citrulline. The urea cycle ensures the detoxification of ammonia by converting it to urea for excretion. This Gallus gallus (Chicken) protein is Ornithine transcarbamylase, mitochondrial.